Consider the following 245-residue polypeptide: 1-(5-phosphoribosyl)-5-[(5-phosphoribosylamino)methylideneamino] imidazole-4-carboxamide isomerase (245 aa).

Aspartate 8 functions as the Proton acceptor in the catalytic mechanism. Aspartate 130 acts as the Proton donor in catalysis.

The protein belongs to the HisA/HisF family.

The protein resides in the cytoplasm. It carries out the reaction 1-(5-phospho-beta-D-ribosyl)-5-[(5-phospho-beta-D-ribosylamino)methylideneamino]imidazole-4-carboxamide = 5-[(5-phospho-1-deoxy-D-ribulos-1-ylimino)methylamino]-1-(5-phospho-beta-D-ribosyl)imidazole-4-carboxamide. The protein operates within amino-acid biosynthesis; L-histidine biosynthesis; L-histidine from 5-phospho-alpha-D-ribose 1-diphosphate: step 4/9. This Pseudomonas syringae pv. tomato (strain ATCC BAA-871 / DC3000) protein is 1-(5-phosphoribosyl)-5-[(5-phosphoribosylamino)methylideneamino] imidazole-4-carboxamide isomerase.